A 283-amino-acid polypeptide reads, in one-letter code: uncharacterized protein (283 aa).

The first 23 residues, methionine 1–serine 23, serve as a signal peptide directing secretion.

It is found in the secreted. This is an uncharacterized protein from Schizosaccharomyces pombe (strain 972 / ATCC 24843) (Fission yeast).